Here is a 456-residue protein sequence, read N- to C-terminus: Chitobiosyldiphosphodolichol beta-mannosyltransferase (456 aa).

Residues 1–22 (MGEIIKYKGFDHVWQYSGPWLY) lie on the Lumenal side of the membrane. Residues 23-43 (CLIGIYISLPVLAYHILPWIF) form a helical membrane-spanning segment. Topologically, residues 44–103 (HKNRSNKRKTISIFVLGDLGHSPRMCYHASSFSKLDYYVNLCGYVETEPSHQIVDDVNID) are cytoplasmic. The helical intramembrane region spans 104–124 (IIPIEAIKNTNNLPYIMFAIL). Residues 125-456 (KVVRQCGKIW…TFSSIFENKS (332 aa)) are Cytoplasmic-facing.

Belongs to the glycosyltransferase group 1 family.

The protein localises to the endoplasmic reticulum membrane. The enzyme catalyses an N,N'-diacetylchitobiosyl-diphospho-di-trans,poly-cis-dolichol + GDP-alpha-D-mannose = a beta-D-Man-(1-&gt;4)-beta-D-GlcNAc-(1-&gt;4)-alpha-D-GlcNAc-diphospho-di-trans,poly-cis-dolichol + GDP + H(+). It functions in the pathway protein modification; protein glycosylation. Participates in the formation of the lipid-linked precursor oligosaccharide for N-glycosylation. Involved in assembling the dolichol-pyrophosphate-GlcNAc(2)-Man(5) intermediate on the cytoplasmic surface of the ER. The polypeptide is Chitobiosyldiphosphodolichol beta-mannosyltransferase (ALG1) (Candida albicans (strain SC5314 / ATCC MYA-2876) (Yeast)).